A 363-amino-acid polypeptide reads, in one-letter code: Protein RecA (363 aa).

Gly-79–Thr-86 contributes to the ATP binding site.

Belongs to the RecA family.

The protein resides in the cytoplasm. Can catalyze the hydrolysis of ATP in the presence of single-stranded DNA, the ATP-dependent uptake of single-stranded DNA by duplex DNA, and the ATP-dependent hybridization of homologous single-stranded DNAs. It interacts with LexA causing its activation and leading to its autocatalytic cleavage. In Borrelia duttonii (strain Ly), this protein is Protein RecA.